The chain runs to 22 residues: Peptide PGLa-R1 (22 aa).

Leucine 22 bears the Leucine amide mark.

As to expression, expressed by the skin glands.

Its subcellular location is the secreted. Antimicrobial peptide. This chain is Peptide PGLa-R1, found in Xenopus ruwenzoriensis (Uganda clawed frog).